Here is a 135-residue protein sequence, read N- to C-terminus: Integration host factor subunit beta (135 aa).

Basic and acidic residues predominate over residues 83–92; that stretch reads GKELRERVDR. The interval 83 to 135 is disordered; it reads GKELRERVDRTVTQGGGMNGNGHAPHGKTGQSQLGSQSPASLHDDGQLNLVRS. Positions 111 to 122 are enriched in polar residues; it reads TGQSQLGSQSPA.

This sequence belongs to the bacterial histone-like protein family. In terms of assembly, heterodimer of an alpha and a beta chain.

Functionally, this protein is one of the two subunits of integration host factor, a specific DNA-binding protein that functions in genetic recombination as well as in transcriptional and translational control. The chain is Integration host factor subunit beta from Cupriavidus metallidurans (strain ATCC 43123 / DSM 2839 / NBRC 102507 / CH34) (Ralstonia metallidurans).